The sequence spans 132 residues: Ribosome-binding factor A (132 aa).

Belongs to the RbfA family. As to quaternary structure, monomer. Binds 30S ribosomal subunits, but not 50S ribosomal subunits or 70S ribosomes.

The protein resides in the cytoplasm. In terms of biological role, one of several proteins that assist in the late maturation steps of the functional core of the 30S ribosomal subunit. Associates with free 30S ribosomal subunits (but not with 30S subunits that are part of 70S ribosomes or polysomes). Required for efficient processing of 16S rRNA. May interact with the 5'-terminal helix region of 16S rRNA. This Treponema denticola (strain ATCC 35405 / DSM 14222 / CIP 103919 / JCM 8153 / KCTC 15104) protein is Ribosome-binding factor A.